We begin with the raw amino-acid sequence, 438 residues long: Gamma-glutamyl phosphate reductase (438 aa).

The protein belongs to the gamma-glutamyl phosphate reductase family.

Its subcellular location is the cytoplasm. It catalyses the reaction L-glutamate 5-semialdehyde + phosphate + NADP(+) = L-glutamyl 5-phosphate + NADPH + H(+). The protein operates within amino-acid biosynthesis; L-proline biosynthesis; L-glutamate 5-semialdehyde from L-glutamate: step 2/2. Functionally, catalyzes the NADPH-dependent reduction of L-glutamate 5-phosphate into L-glutamate 5-semialdehyde and phosphate. The product spontaneously undergoes cyclization to form 1-pyrroline-5-carboxylate. This is Gamma-glutamyl phosphate reductase from Prochlorococcus marinus (strain NATL1A).